Reading from the N-terminus, the 317-residue chain is DNA-3-methyladenine glycosylase (317 aa).

Residues 1–76 (SKEPVSVVLP…KEKLSSTPGL (76 aa)) form a disordered region. A compositionally biased stretch (low complexity) spans 53–64 (KKQQLAQSEQQQ). 2 positions are modified to phosphoserine: S84 and S258.

This sequence belongs to the DNA glycosylase MPG family. Binds MBD1. Binds SSBP1.

It is found in the cytoplasm. The protein resides in the mitochondrion matrix. The protein localises to the mitochondrion nucleoid. Its subcellular location is the nucleus. The enzyme catalyses Hydrolysis of alkylated DNA, releasing 3-methyladenine, 3-methylguanine, 7-methylguanine and 7-methyladenine.. Its activity is regulated as follows. Binding to SSBP1 in mitochondria inhibits glycosylase activity in the context of a single-stranded DNA (ssDNA), but not a double-stranded DNA (dsDNA) substrates. Its function is as follows. Hydrolysis of the deoxyribose N-glycosidic bond to excise 3-methyladenine, and 7-methylguanine from the damaged DNA polymer formed by alkylation lesions. The polypeptide is DNA-3-methyladenine glycosylase (Mpg) (Rattus norvegicus (Rat)).